Reading from the N-terminus, the 125-residue chain is Putative zinc finger A20 and AN1 domain-containing stress-associated protein 8 (125 aa).

The A20-type zinc-finger motif lies at 2–36 (TGEPSLCIRGCGFFSTSQTKNLCSKCYNDFLKDES). Zn(2+)-binding residues include Cys-8, Cys-12, Cys-24, Cys-27, Cys-80, Cys-82, His-96, and Cys-98. Residues 61-106 (LGSKGGCACKKKVGLLGFHCRCGHLFFASHRYPEEHSCPSDYKSAA) form an AN1-type; degenerate zinc finger.

May be involved in environmental stress response. The sequence is that of Putative zinc finger A20 and AN1 domain-containing stress-associated protein 8 (SAP8) from Arabidopsis thaliana (Mouse-ear cress).